Reading from the N-terminus, the 532-residue chain is FRIGIDA-like protein 4a (532 aa).

Residues 406-432 (KTEKRKPAAVPANKRTRASYNGPMPPA) form a disordered region.

This sequence belongs to the Frigida family. As to expression, expressed in leaves, shoot apex, flowers and during seed development.

The chain is FRIGIDA-like protein 4a (FRL4A) from Arabidopsis thaliana (Mouse-ear cress).